The primary structure comprises 193 residues: Ribosome maturation factor RimM (193 aa).

The PRC barrel domain occupies Val112–Phe193.

It belongs to the RimM family. In terms of assembly, binds ribosomal protein uS19.

Its subcellular location is the cytoplasm. An accessory protein needed during the final step in the assembly of 30S ribosomal subunit, possibly for assembly of the head region. Essential for efficient processing of 16S rRNA. May be needed both before and after RbfA during the maturation of 16S rRNA. It has affinity for free ribosomal 30S subunits but not for 70S ribosomes. The sequence is that of Ribosome maturation factor RimM from Methylibium petroleiphilum (strain ATCC BAA-1232 / LMG 22953 / PM1).